The chain runs to 211 residues: Recombination protein RecR (211 aa).

The C4-type zinc finger occupies 70 to 85 (CRECFLITDREVCPIC). The 98-residue stretch at 93–190 (KFICVVEESQ…KITRTAYGFQ (98 aa)) folds into the Toprim domain.

It belongs to the RecR family.

In terms of biological role, may play a role in DNA repair. It seems to be involved in an RecBC-independent recombinational process of DNA repair. It may act with RecF and RecO. The polypeptide is Recombination protein RecR (Aquifex aeolicus (strain VF5)).